The chain runs to 427 residues: Putative tyrosine recombinase XerC (427 aa).

Residues 1-81 (MTPQQLTEEY…HLRTIWGYAI (81 aa)) enclose the Core-binding (CB) domain. The Tyr recombinase domain maps to 116–305 (RARSWLSMQV…DYDHMRAVLH (190 aa)). Catalysis depends on residues Arg-156, Lys-183, His-256, Arg-259, and His-283. Tyr-292 acts as the O-(3'-phospho-DNA)-tyrosine intermediate in catalysis. Disordered stretches follow at residues 323–384 (SGSP…PPDT) and 401–427 (RAAT…DSLA). Over residues 350–362 (ARTEPSEPREHTQ) the composition is skewed to basic and acidic residues. The span at 402–413 (AATASAVPAATS) shows a compositional bias: low complexity.

This sequence belongs to the 'phage' integrase family.

The protein localises to the cytoplasm. Its function is as follows. Site-specific tyrosine recombinase, which acts by catalyzing the cutting and rejoining of the recombining DNA molecules. The protein is Putative tyrosine recombinase XerC of Pseudomonas aeruginosa.